The chain runs to 214 residues: MSYDLIEWKIESLQIDYQEAICFMQQRIEDIYNGVQKELVWLLEHPPLYTAGTGAKVEDLLVDNLFPVYATNRGGKYTYHGPGQRIAYVMLNLKTRNKCNIRLYVETLGNWIVETLSHFSVKSYFNPDLIGVWVTHGGTEKKIAAFGIRIRKWVTYHGVSINIDTNLSHYSGIVPCGIKDYGITSLRKLGINISYEEFDIVLQEKFNEIFSNFN.

Positions 34-214 (GVQKELVWLL…KFNEIFSNFN (181 aa)) constitute a BPL/LPL catalytic domain. Residues 73–80 (RGGKYTYH), 145–147 (AFG), and 158–160 (GVS) contribute to the substrate site. Cys176 acts as the Acyl-thioester intermediate in catalysis.

Belongs to the LipB family.

It is found in the cytoplasm. It catalyses the reaction octanoyl-[ACP] + L-lysyl-[protein] = N(6)-octanoyl-L-lysyl-[protein] + holo-[ACP] + H(+). It participates in protein modification; protein lipoylation via endogenous pathway; protein N(6)-(lipoyl)lysine from octanoyl-[acyl-carrier-protein]: step 1/2. Its function is as follows. Catalyzes the transfer of endogenously produced octanoic acid from octanoyl-acyl-carrier-protein onto the lipoyl domains of lipoate-dependent enzymes. Lipoyl-ACP can also act as a substrate although octanoyl-ACP is likely to be the physiological substrate. The chain is Octanoyltransferase from Ehrlichia chaffeensis (strain ATCC CRL-10679 / Arkansas).